A 298-amino-acid polypeptide reads, in one-letter code: Protein ILRUN (298 aa).

The tract at residues 199 to 277 (NTQPHRKVEG…SVNLSPSSHA (79 aa)) is disordered. Ser215 and Ser222 each carry phosphoserine. The span at 242–255 (TWAPAPDTWAPAPD) shows a compositional bias: low complexity. Positions 262 to 277 (NRLSQNSVNLSPSSHA) are enriched in polar residues. Ser272 carries the phosphoserine modification.

Interacts with IRF3; the interaction inhibits IRF3 binding to its DNA consensus sequence. In terms of tissue distribution, expressed in lung (at protein level).

Its subcellular location is the cytoplasm. It localises to the nucleus. In terms of biological role, negative regulator of innate antiviral response. Blocks IRF3-dependent cytokine production such as IFNA, IFNB and TNF. Interacts with IRF3 and inhibits IRF3 recruitment to type I IFN promoter sequences while also reducing nuclear levels of the coactivators EP300 and CREBBP. This chain is Protein ILRUN, found in Homo sapiens (Human).